We begin with the raw amino-acid sequence, 251 residues long: uncharacterized protein (251 aa).

A divalent metal cation-binding residues include His5, His7, Glu101, His132, His163, and Asp209.

This sequence belongs to the metallo-dependent hydrolases superfamily. TatD-type hydrolase family. The cofactor is a divalent metal cation.

This is an uncharacterized protein from Methanocaldococcus jannaschii (strain ATCC 43067 / DSM 2661 / JAL-1 / JCM 10045 / NBRC 100440) (Methanococcus jannaschii).